Consider the following 350-residue polypeptide: Probable sugar phosphate/phosphate translocator At4g32390 (350 aa).

The next 10 helical transmembrane spans lie at 15–35 (ILLS…VIVY), 49–69 (FPIT…VILI), 89–109 (VVPI…AYIY), 112–132 (VSFI…IGVL), 146–166 (MLSI…FDTW), 168–188 (VMLQ…IQIL), 205–225 (VAPC…LPIL), 235–255 (FVIF…VFLL), 263–283 (TMNV…WSVI), and 286–306 (TVTP…AYYN). Positions 38 to 155 (YILDKKMYNW…MLSISFGVAI (118 aa)) constitute an EamA domain. The segment at 324 to 350 (QGDEEEAGKLLEERESEAAAKRNETED) is disordered.

It belongs to the TPT transporter family. TPT (TC 2.A.7.9) subfamily.

The protein resides in the membrane. The sequence is that of Probable sugar phosphate/phosphate translocator At4g32390 from Arabidopsis thaliana (Mouse-ear cress).